Reading from the N-terminus, the 101-residue chain is NAD(P)H-quinone oxidoreductase subunit 4L, chloroplastic (101 aa).

The next 3 membrane-spanning stretches (helical) occupy residues 2 to 22, 32 to 52, and 61 to 81; these read MLEHVLVLSAYLFSIGIYGLI, MCLELILNAVNLNFVTFSDFF, and IFSIFVIAIAAAEAAIGPAIV.

The protein belongs to the complex I subunit 4L family. In terms of assembly, NDH is composed of at least 16 different subunits, 5 of which are encoded in the nucleus.

The protein resides in the plastid. It localises to the chloroplast thylakoid membrane. It carries out the reaction a plastoquinone + NADH + (n+1) H(+)(in) = a plastoquinol + NAD(+) + n H(+)(out). It catalyses the reaction a plastoquinone + NADPH + (n+1) H(+)(in) = a plastoquinol + NADP(+) + n H(+)(out). Functionally, NDH shuttles electrons from NAD(P)H:plastoquinone, via FMN and iron-sulfur (Fe-S) centers, to quinones in the photosynthetic chain and possibly in a chloroplast respiratory chain. The immediate electron acceptor for the enzyme in this species is believed to be plastoquinone. Couples the redox reaction to proton translocation, and thus conserves the redox energy in a proton gradient. The chain is NAD(P)H-quinone oxidoreductase subunit 4L, chloroplastic from Manihot esculenta (Cassava).